We begin with the raw amino-acid sequence, 141 residues long: Mitochondrial import inner membrane translocase subunit tim16 (141 aa).

Residues 59–117 (EACKILNVNKPADGTAANMEEVMERFKRLFDANDPEKGGSFYLQSKVVRARERLEAEIK) are J-like. Residues 119 to 141 (KMEEKQAEEEVKEGWNPKIYKDR) form a disordered region.

It belongs to the TIM16/PAM16 family. In terms of assembly, heterodimer with tim14/pam18. Component of the PAM complex, at least composed of hsp70-5/ssc1, grpe/mge1, tim44, un-4/pam16, pam17 and tim14/pam18.

It localises to the mitochondrion inner membrane. Functionally, essential component of the PAM complex, a complex required for the translocation of transit peptide-containing proteins from the inner membrane into the mitochondrial matrix in an ATP-dependent manner. In the complex, it is required to regulate activity of mtHSP70 (hsp70-5) via its interaction with tim14/pam18. May act by positioning tim14/pam18 in juxtaposition to mtHSP70 at the translocon to maximize ATPase stimulation. The chain is Mitochondrial import inner membrane translocase subunit tim16 (un-4) from Neurospora crassa (strain ATCC 24698 / 74-OR23-1A / CBS 708.71 / DSM 1257 / FGSC 987).